The chain runs to 257 residues: Thiazole synthase (257 aa).

The Schiff-base intermediate with DXP role is filled by Lys-96. Residues Gly-157, 184–185, and 206–207 each bind 1-deoxy-D-xylulose 5-phosphate; these read AG and NT.

The protein belongs to the ThiG family. Homotetramer. Forms heterodimers with either ThiH or ThiS.

The protein localises to the cytoplasm. It catalyses the reaction [ThiS sulfur-carrier protein]-C-terminal-Gly-aminoethanethioate + 2-iminoacetate + 1-deoxy-D-xylulose 5-phosphate = [ThiS sulfur-carrier protein]-C-terminal Gly-Gly + 2-[(2R,5Z)-2-carboxy-4-methylthiazol-5(2H)-ylidene]ethyl phosphate + 2 H2O + H(+). It participates in cofactor biosynthesis; thiamine diphosphate biosynthesis. Catalyzes the rearrangement of 1-deoxy-D-xylulose 5-phosphate (DXP) to produce the thiazole phosphate moiety of thiamine. Sulfur is provided by the thiocarboxylate moiety of the carrier protein ThiS. In vitro, sulfur can be provided by H(2)S. This chain is Thiazole synthase, found in Rhizobium meliloti (strain 1021) (Ensifer meliloti).